The primary structure comprises 700 residues: MAQEVLTDLNKVRNIGIMAHIDAGKTTTTERILFYTGVNYKIGETHDGASTTDWMEQEKERGITITSAAVTCFWNNNQINIIDTPGHVDFTVEVERSLRVLDGAVAVFDGKEGVEPQSEQVWRQAAKYDVPRICFVNKMDKMGADFYFTVQTIIDRLGAKPLVLQLPIGAEDDFDGVVDLVEMKAVTWRGTVAIGAEPTIEEIPADLADKAAEYREKLLETVAESDEKLMEKYFAGEELSVEEIKGAIRKMTVNSELYPVLCGSAFKNKGVQPMLDAVIDYLPNPLDIGEVQGHALGNEEEVLTRKPSKEEPFSALAFKIASHPFFGKLTFVRVYSGRIDPGAQVMNATKGKKERIGKLFQMHANKENPVDEAVAGHIYAMIGLKDTTTGDTLCAQDAPIVLESMSFPDPVIQVSIEPKTKSDQEKLGTAIQKLAEEDPTFSVELDEETGQTVIGGMGELHLDILVDRMRREFKVEANVGKPQVAYRETITKKVEKHDYTHKKQTGGSGQFAKVIIALEPFVGEDGASYEFENKVSGGRIPREYIPSVDAGAQDAMQYGVLAGYPLVNLKLSLLDGAYHDVDSSEMAFKVAGSQALKEAARKAGPVILEPLMAVEVTTPEEYMGDVIGDLNSRRGQIQAMEERSGARVVKALVPLSEMFGYIGDLRSKTQGRANFSMVFDSYAEVPANVSKEIIAKATGE.

The tr-type G domain occupies 10–286 (NKVRNIGIMA…AVIDYLPNPL (277 aa)). GTP contacts are provided by residues 19 to 26 (AHIDAGKT), 83 to 87 (DTPGH), and 137 to 140 (NKMD).

The protein belongs to the TRAFAC class translation factor GTPase superfamily. Classic translation factor GTPase family. EF-G/EF-2 subfamily.

The protein localises to the cytoplasm. In terms of biological role, catalyzes the GTP-dependent ribosomal translocation step during translation elongation. During this step, the ribosome changes from the pre-translocational (PRE) to the post-translocational (POST) state as the newly formed A-site-bound peptidyl-tRNA and P-site-bound deacylated tRNA move to the P and E sites, respectively. Catalyzes the coordinated movement of the two tRNA molecules, the mRNA and conformational changes in the ribosome. The chain is Elongation factor G from Rhodococcus opacus (strain B4).